Consider the following 214-residue polypeptide: Cytochrome c biogenesis ATP-binding export protein CcmA (214 aa).

One can recognise an ABC transporter domain in the interval 8–212; sequence LYAADLACLK…PPTVLDLSEV (205 aa). 40–47 serves as a coordination point for ATP; sequence GPNGFGKT.

This sequence belongs to the ABC transporter superfamily. CcmA exporter (TC 3.A.1.107) family. As to quaternary structure, the complex is composed of two ATP-binding proteins (CcmA) and two transmembrane proteins (CcmB).

It localises to the cell inner membrane. It carries out the reaction heme b(in) + ATP + H2O = heme b(out) + ADP + phosphate + H(+). In terms of biological role, part of the ABC transporter complex CcmAB involved in the biogenesis of c-type cytochromes; once thought to export heme, this seems not to be the case, but its exact role is uncertain. Responsible for energy coupling to the transport system. In Aromatoleum aromaticum (strain DSM 19018 / LMG 30748 / EbN1) (Azoarcus sp. (strain EbN1)), this protein is Cytochrome c biogenesis ATP-binding export protein CcmA.